Reading from the N-terminus, the 426-residue chain is Enolase (426 aa).

Residue Gln162 coordinates (2R)-2-phosphoglycerate. Glu204 (proton donor) is an active-site residue. Positions 241, 284, and 311 each coordinate Mg(2+). Lys336, Arg365, Ser366, and Lys387 together coordinate (2R)-2-phosphoglycerate. Lys336 serves as the catalytic Proton acceptor.

The protein belongs to the enolase family. Mg(2+) serves as cofactor.

It is found in the cytoplasm. The protein resides in the secreted. Its subcellular location is the cell surface. The catalysed reaction is (2R)-2-phosphoglycerate = phosphoenolpyruvate + H2O. Its pathway is carbohydrate degradation; glycolysis; pyruvate from D-glyceraldehyde 3-phosphate: step 4/5. Its function is as follows. Catalyzes the reversible conversion of 2-phosphoglycerate (2-PG) into phosphoenolpyruvate (PEP). It is essential for the degradation of carbohydrates via glycolysis. This is Enolase from Acidithiobacillus ferrooxidans (strain ATCC 23270 / DSM 14882 / CIP 104768 / NCIMB 8455) (Ferrobacillus ferrooxidans (strain ATCC 23270)).